We begin with the raw amino-acid sequence, 218 residues long: Large ribosomal subunit protein bL25 (218 aa).

Positions 197 to 218 are disordered; that stretch reads PAEESGEKPVAHIEEKESTEKE. Residues 201 to 218 show a composition bias toward basic and acidic residues; the sequence is SGEKPVAHIEEKESTEKE.

It belongs to the bacterial ribosomal protein bL25 family. CTC subfamily. In terms of assembly, part of the 50S ribosomal subunit; part of the 5S rRNA/L5/L18/L25 subcomplex. Contacts the 5S rRNA. Binds to the 5S rRNA independently of L5 and L18.

In terms of biological role, this is one of the proteins that binds to the 5S RNA in the ribosome where it forms part of the central protuberance. This is Large ribosomal subunit protein bL25 from Dehalococcoides mccartyi (strain ATCC BAA-2100 / JCM 16839 / KCTC 5957 / BAV1).